We begin with the raw amino-acid sequence, 467 residues long: Neutrophil collagenase (467 aa).

The first 20 residues, 1 to 20 (MFSLKTLPFLLLLHVQISKA), serve as a signal peptide directing secretion. The propeptide at 21 to 100 (FPVSSKEKNT…CGVPDSGGFM (80 aa)) is activation peptide. Residues asparagine 54 and asparagine 73 are each glycosylated (N-linked (GlcNAc...) asparagine). The short motif at 89-96 (PRCGVPDS) is the Cysteine switch element. Residue cysteine 91 coordinates Zn(2+). An N-linked (GlcNAc...) asparagine glycan is attached at asparagine 112. Position 157 (aspartate 157) interacts with Ca(2+). The Zn(2+) site is built by histidine 167 and aspartate 169. The Ca(2+) site is built by aspartate 174, glycine 175, asparagine 177, and isoleucine 179. Histidine 182 is a binding site for Zn(2+). Residues glycine 189, glycine 191, and aspartate 193 each coordinate Ca(2+). A Zn(2+)-binding site is contributed by histidine 195. Positions 197 and 200 each coordinate Ca(2+). Residue asparagine 204 is glycosylated (N-linked (GlcNAc...) asparagine). Histidine 217 is a binding site for Zn(2+). Residue glutamate 218 is part of the active site. Positions 221 and 227 each coordinate Zn(2+). Residue asparagine 246 is glycosylated (N-linked (GlcNAc...) asparagine). Hemopexin repeat units follow at residues 276-325 (PKPC…WPSL), 326-372 (PTGI…GFPS), 374-420 (VQAI…FPGI), and 421-464 (ESKV…WLNC). A disulfide bridge links cysteine 279 with cysteine 464. Residue aspartate 286 coordinates Ca(2+). Residues aspartate 378 and aspartate 425 each contribute to the Ca(2+) site.

This sequence belongs to the peptidase M10A family. Requires Ca(2+) as cofactor. Zn(2+) serves as cofactor. As to expression, neutrophils.

Its subcellular location is the cytoplasmic granule. The protein resides in the secreted. The protein localises to the extracellular space. It localises to the extracellular matrix. It carries out the reaction Cleavage of interstitial collagens in the triple helical domain. Unlike EC 3.4.24.7, this enzyme cleaves type III collagen more slowly than type I.. Its activity is regulated as follows. Cannot be activated without removal of the activation peptide. In terms of biological role, can degrade fibrillar type I, II, and III collagens. In Homo sapiens (Human), this protein is Neutrophil collagenase (MMP8).